Consider the following 426-residue polypeptide: Cytochrome c biogenesis protein CcsB (426 aa).

3 helical membrane passes run 11-31 (LRVA…GTAI), 69-89 (SVWF…CSWR), and 159-179 (VGPL…VWGV).

Belongs to the Ccs1/CcsB family. In terms of assembly, may interact with CcsA.

The protein localises to the cellular thylakoid membrane. In terms of biological role, required during biogenesis of c-type cytochromes (cytochrome c6 and cytochrome f) at the step of heme attachment. This chain is Cytochrome c biogenesis protein CcsB, found in Synechococcus sp. (strain CC9902).